The following is a 352-amino-acid chain: Photosystem II D2 protein (352 aa).

Residues 1–31 (MTIAIGRAPAERGWFDILDDWLKRDRFVFVG) lie on the Cytoplasmic side of the membrane. Residues 32-53 (WSGILLFPCAYLALGGWLTGTT) traverse the membrane as a helical segment. The Lumenal segment spans residues 54–108 (FVTSWYTHGLASSYLEGCNFLTVAVSTPANSMGHSLLLLWGPEAQGDFTRWCQLG). Residues 109–131 (GLWTFIALHGAFGLIGFMLRQFE) traverse the membrane as a helical segment. Residue histidine 117 participates in chlorophyll a binding. A pheophytin a-binding site is contributed by glutamine 129. Residues 132–140 (IARLVGVRP) are Cytoplasmic-facing. The helical transmembrane segment at 141–160 (YNAIAFSAPIAVFVSVFLIY) threads the bilayer. A pheophytin a-binding site is contributed by asparagine 142. Over 161 to 193 (PLGQSSWFFAPSFGVAAIFRFLLFFQGFHNWTL) the chain is Lumenal. Residues 194 to 217 (NPFHMMGVAGVLGGALLCAIHGAT) form a helical membrane-spanning segment. Histidine 197 is a binding site for chlorophyll a. 2 residues coordinate a plastoquinone: histidine 214 and phenylalanine 261. Residue histidine 214 coordinates Fe cation. Residues 218–265 (VENTLFQDGEGASTFRAFNPTQAEETYSMVTANRFWSQIFGIAFSNKR) lie on the Cytoplasmic side of the membrane. Residues 266 to 288 (WLHFFMLFVPVTGLWMSAIGVVG) traverse the membrane as a helical segment. Histidine 268 contacts Fe cation. Over 289–352 (LALNLRSYDF…EEVLPRGNAL (64 aa)) the chain is Lumenal.

This sequence belongs to the reaction center PufL/M/PsbA/D family. In terms of assembly, PSII is composed of 1 copy each of membrane proteins PsbA, PsbB, PsbC, PsbD, PsbE, PsbF, PsbH, PsbI, PsbJ, PsbK, PsbL, PsbM, PsbT, PsbX, PsbY, PsbZ, Psb30/Ycf12, peripheral proteins PsbO, CyanoQ (PsbQ), PsbU, PsbV and a large number of cofactors. It forms dimeric complexes. Part of a photosystem II (PSII) assembly intermediate complex PSII-I; crystallized from a strain deleted of psbJ, it forms monomeric PSII before addition of the oxygen evolving complex. PSII-I includes 3 assembly factors not found in mature PSII (Psb27, Psb28 and Psb34). The D1/D2 heterodimer binds P680, chlorophylls that are the primary electron donor of PSII, and subsequent electron acceptors. It shares a non-heme iron and each subunit binds pheophytin, quinone, additional chlorophylls, carotenoids and lipids. There is also a Cl(-1) ion associated with D1 and D2, which is required for oxygen evolution. PSII binds additional chlorophylls, carotenoids and specific lipids. serves as cofactor.

The protein localises to the cellular thylakoid membrane. It carries out the reaction 2 a plastoquinone + 4 hnu + 2 H2O = 2 a plastoquinol + O2. Photosystem II (PSII) is a light-driven water:plastoquinone oxidoreductase that uses light energy to abstract electrons from H(2)O, generating O(2) and a proton gradient subsequently used for ATP formation. It consists of a core antenna complex that captures photons, and an electron transfer chain that converts photonic excitation into a charge separation. The D1/D2 (PsbA/PsbD) reaction center heterodimer binds P680, the primary electron donor of PSII as well as several subsequent electron acceptors. D2 is needed for assembly of a stable PSII complex. The sequence is that of Photosystem II D2 protein from Thermosynechococcus vestitus (strain NIES-2133 / IAM M-273 / BP-1).